The following is a 380-amino-acid chain: Chaperone protein DnaJ (380 aa).

Residues 6 to 71 form the J domain; it reads DYYAILEVSR…QKRAAYDQYG (66 aa). A CR-type zinc finger spans residues 136 to 215; that stretch reads GVKKDVRVIT…CHGEGTVEKE (80 aa). Residues Cys149, Cys152, Cys167, Cys170, Cys189, Cys192, Cys203, and Cys206 each coordinate Zn(2+). CXXCXGXG motif repeat units lie at residues 149 to 156, 167 to 174, 189 to 196, and 203 to 210; these read CEACHGTG, CPSCHGAG, CPTCHGAG, and CKVCHGEG.

This sequence belongs to the DnaJ family. As to quaternary structure, homodimer. Zn(2+) serves as cofactor.

The protein resides in the cytoplasm. Its function is as follows. Participates actively in the response to hyperosmotic and heat shock by preventing the aggregation of stress-denatured proteins and by disaggregating proteins, also in an autonomous, DnaK-independent fashion. Unfolded proteins bind initially to DnaJ; upon interaction with the DnaJ-bound protein, DnaK hydrolyzes its bound ATP, resulting in the formation of a stable complex. GrpE releases ADP from DnaK; ATP binding to DnaK triggers the release of the substrate protein, thus completing the reaction cycle. Several rounds of ATP-dependent interactions between DnaJ, DnaK and GrpE are required for fully efficient folding. Also involved, together with DnaK and GrpE, in the DNA replication of plasmids through activation of initiation proteins. The sequence is that of Chaperone protein DnaJ from Acetobacter pasteurianus (strain NBRC 105184 / IFO 3283-01).